The sequence spans 945 residues: Netrin receptor UNC5B (945 aa).

Residues 1–26 (MGARSGARGALLLALLLCWDPRLSQA) form the signal peptide. At 27–377 (GTDSGSEVLP…LEASGDAALY (351 aa)) the chain is on the extracellular side. One can recognise an Ig-like domain in the interval 48–145 (PYFLQEPQDA…AGTTKSRRAY (98 aa)). 9 disulfides stabilise this stretch: Cys-69-Cys-130, Cys-81-Cys-128, Cys-174-Cys-225, Cys-258-Cys-295, Cys-262-Cys-299, Cys-273-Cys-285, Cys-314-Cys-348, Cys-318-Cys-353, and Cys-326-Cys-338. The 96-residue stretch at 147 to 242 (RIAYLRKNFD…KRRSTTATVI (96 aa)) folds into the Ig-like C2-type domain. N-linked (GlcNAc...) asparagine glycosylation is present at Asn-222. TSP type-1 domains follow at residues 246 to 300 (NGGW…TICP) and 302 to 354 (DGAW…GLCM). N-linked (GlcNAc...) asparagine glycosylation is present at Asn-347. A helical transmembrane segment spans residues 378 to 398 (AGLVVAIFVVVAILMAVGVVV). At 399-945 (YRRNCRDFDT…LVAVATDGDC (547 aa)) the chain is on the cytoplasmic side. Residue Cys-403 is the site of S-palmitoyl cysteine attachment. Positions 543 to 686 (SSVSGTFGCL…LGTYVFTGES (144 aa)) constitute a ZU5 domain. A Phosphotyrosine modification is found at Tyr-581. Positions 689-838 (RSAVKRLQLA…AETPAGSLDT (150 aa)) are UPA domain. The segment at 707 to 725 (SLEYSLRVYCLEDTPVALK) is interaction with DCC. One can recognise a Death domain in the interval 865–943 (KICNSLDAPN…EMLVAVATDG (79 aa)).

Belongs to the unc-5 family. As to quaternary structure, interacts with the cytoplasmic part of DCC. Interacts with GNAI2 via its cytoplasmic part. Interacts (via death domain) with DAPK1 (via death domain). Interacts (via extracellular domain) with FLRT3 (via extracellular domain); the interaction is direct. Interacts (via extracellular domain) with FLRT2 and FLRT3 (via extracellular domain), but has higher affinity for FLRT3. Identified in a complex with FLRT3 and ADGRL3; does not interact with ADGRL3 by itself. In terms of processing, phosphorylated on cytoplasmic tyrosine residues. Proteolytically cleaved by caspases during apoptosis. The cleavage does not take place when the receptor is associated with netrin ligand. Its cleavage by caspases is required to induce apoptosis. Post-translationally, palmitoylation is required for pro-apoptotic activity, but not for location at lipid rafts. In terms of tissue distribution, highly expressed in brain. Also expressed at lower level in developing lung, cartilage, kidney and hematopoietic and immune tissues.

It is found in the cell membrane. It localises to the membrane raft. Its function is as follows. Receptor for netrin required for axon guidance. Mediates axon repulsion of neuronal growth cones in the developing nervous system upon ligand binding. Axon repulsion in growth cones may be caused by its association with DCC that may trigger signaling for repulsion. Functions as a netrin receptor that negatively regulates vascular branching during angiogenesis. Mediates retraction of tip cell filopodia on endothelial growth cones in response to netrin. It also acts as a dependence receptor required for apoptosis induction when not associated with netrin ligand. Mediates apoptosis by activating DAPK1. In the absence of NTN1, activates DAPK1 by reducing its autoinhibitory phosphorylation at Ser-308 thereby increasing its catalytic activity. The chain is Netrin receptor UNC5B (UNC5B) from Homo sapiens (Human).